The sequence spans 283 residues: Elongation factor Ts (283 aa).

Residues threonine 80–valine 83 form an involved in Mg(2+) ion dislocation from EF-Tu region.

Belongs to the EF-Ts family.

It localises to the cytoplasm. Associates with the EF-Tu.GDP complex and induces the exchange of GDP to GTP. It remains bound to the aminoacyl-tRNA.EF-Tu.GTP complex up to the GTP hydrolysis stage on the ribosome. This chain is Elongation factor Ts, found in Citrobacter koseri (strain ATCC BAA-895 / CDC 4225-83 / SGSC4696).